The sequence spans 163 residues: Regulatory protein RecX (163 aa).

The tract at residues methionine 1–valine 21 is disordered.

Belongs to the RecX family.

The protein resides in the cytoplasm. Its function is as follows. Modulates RecA activity. The protein is Regulatory protein RecX of Stenotrophomonas maltophilia (strain K279a).